The chain runs to 322 residues: Epiphycan (322 aa).

Positions 1-19 (MGMLARVALGLIIIDAVLA) are cleaved as a signal peptide. The segment at 58 to 108 (KVSERLSGNRELLTPGPQLGDNQDEDKDEESTPRLIDGSSPQEPEFPGLLG) is disordered. O-linked (Xyl...) (dermatan sulfate) serine glycosylation is present at Ser-64. O-linked (GalNAc...) serine glycosylation is present at Ser-96. The 38-residue stretch at 106-143 (LLGPHTNEDFPTCLLCTCISTTVYCDDHELDAIPPLPK) folds into the LRRNT domain. Residues Cys-118 and Cys-130 are joined by a disulfide bond. LRR repeat units follow at residues 144-165 (KTTY…DFAS), 168-189 (DLKR…AFRK), 192-213 (HLQE…PNTL), 238-258 (DLHH…PLPE), and 259-280 (SLRA…TFCN). Cys-279 and Cys-312 are oxidised to a cystine. Residues Asn-283 and Asn-302 are each glycosylated (N-linked (GlcNAc...) asparagine). The stretch at 290 to 310 (ALEDIRLDGNPINLSRTPQAY) is one LRR 6 repeat.

The protein belongs to the small leucine-rich proteoglycan (SLRP) family. SLRP class III subfamily. Post-translationally, the O-linked polysaccharide on Ser-96 is probably the mucin type linked to GalNAc. There is one glycosaminoglycan chain, known to be dermatan sulfate, and it is probably the O-glycosylation at Ser-64. In terms of tissue distribution, confined to the middle zone of embryonic epiphyseal cartilage consisting of flattened chondrocytes and the ossifying region in the limb buds of chick embryos. Has also been detected in testis.

Its subcellular location is the secreted. The protein resides in the extracellular space. The protein localises to the extracellular matrix. Its function is as follows. May have a role in bone formation and also in establishing the ordered structure of cartilage through matrix organization. The polypeptide is Epiphycan (Epyc) (Mus musculus (Mouse)).